We begin with the raw amino-acid sequence, 441 residues long: Putative F-box/FBD/LRR-repeat protein At4g00315 (441 aa).

Residues 1-47 (MDKTSQLPDELLVKVLSFLPTKDAVRTSLLSMRWKSLWMWLPKLEYD) form the F-box domain. 8 LRR repeats span residues 57–82 (QGLARFITLSLLGHKAPAIESLSLKL), 87–115 (IGSIKPEDIYLWVSLAVHDSNVRELSLKL), 137–164 (ILKLKDEILVDVPRKVCLPSLKTLFLGR), 165–190 (VTYSDEDSLHRLLSNCPVLEDLVVER), 211–236 (LKMSCPCHLDGIMMNTPSLKYLKVTD), 243–271 (SDNESDSDSPRYFYDFEDMPKLEEADFVL), 293–318 (LGVYTEESLYHEGLVFNQLEQLKICS), and 319–344 (CDSDWSILLSRLLESSPNLRELEAYV). The region spanning 358 to 410 (QWGNQLNCVPKCLLSSLETFKWSEMYGLLQNQMDVAKYILRNARCLKSATIFF) is the FBD domain.

This chain is Putative F-box/FBD/LRR-repeat protein At4g00315, found in Arabidopsis thaliana (Mouse-ear cress).